The chain runs to 1977 residues: Echinoderm microtubule-associated protein-like 5 (1977 aa).

WD repeat units follow at residues 59–100 (GHSD…TVSV), 104–145 (VHTH…MLSM), 148–187 (GHTD…LTPK), 195–233 (GDLQ…RTIQ), 235–273 (AHTA…TVID), 280–321 (GYKG…LIMQ), 323–362 (HCEG…LIAR), 406–445 (DRKE…KKVG), 449–488 (GSLS…EVTS), and 561–601 (GHSA…KLKD). A disordered region spans residues 609 to 629 (ESLAESNSDESDSDLSDVPEL). Over residues 615-629 (NSDESDSDLSDVPEL) the composition is skewed to acidic residues. WD repeat units follow at residues 725–766 (GHDD…PLSI), 770–811 (YHQY…KLSV), 814–853 (GSKD…LIGK), 861–900 (GKND…KTVK), 901–940 (AHDG…KTYA), 996–1035 (HMEG…CMLA), 1038–1077 (KLKK…DLVS), 1080–1120 (HRKD…RVGV), and 1236–1276 (AHST…HREK). Disordered stretches follow at residues 1276–1297 (KKYC…YDSD) and 1323–1363 (PHLQ…NVGK). The segment covering 1281–1294 (SEESDIDSEEDGGY) has biased composition (acidic residues). Residues 1326–1337 (QQKEPSVDERQG) show a composition bias toward basic and acidic residues. WD repeat units lie at residues 1420 to 1471 (EHND…TLSI), 1475 to 1516 (SHSK…KIAS), 1519 to 1558 (GHNQ…LLSK), 1568 to 1606 (ARMQ…RVVA), 1608 to 1654 (AHNG…RAFR), 1699 to 1739 (GHVD…MLNK), 1741 to 1782 (NLGH…GKKR), 1783 to 1822 (DRRC…TLNR), 1895 to 1934 (AEKA…KFAK), and 1940 to 1977 (GHSP…HMPH).

It belongs to the WD repeat EMAP family.

It is found in the cytoplasm. Its subcellular location is the cytoskeleton. In terms of biological role, may modify the assembly dynamics of microtubules, such that microtubules are slightly longer, but more dynamic. The chain is Echinoderm microtubule-associated protein-like 5 (Eml5) from Mus musculus (Mouse).